The sequence spans 377 residues: Queuine tRNA-ribosyltransferase (377 aa).

Asp-89 acts as the Proton acceptor in catalysis. Substrate is bound by residues 89 to 93 (DSGGF), Asp-143, Gln-187, and Gly-214. The segment at 245–251 (GVGKPED) is RNA binding. The active-site Nucleophile is the Asp-264. Positions 269–273 (TRNAR) are RNA binding; important for wobble base 34 recognition. Positions 302, 304, 307, and 333 each coordinate Zn(2+).

This sequence belongs to the queuine tRNA-ribosyltransferase family. As to quaternary structure, homodimer. Within each dimer, one monomer is responsible for RNA recognition and catalysis, while the other monomer binds to the replacement base PreQ1. Zn(2+) is required as a cofactor.

It carries out the reaction 7-aminomethyl-7-carbaguanine + guanosine(34) in tRNA = 7-aminomethyl-7-carbaguanosine(34) in tRNA + guanine. The protein operates within tRNA modification; tRNA-queuosine biosynthesis. Catalyzes the base-exchange of a guanine (G) residue with the queuine precursor 7-aminomethyl-7-deazaguanine (PreQ1) at position 34 (anticodon wobble position) in tRNAs with GU(N) anticodons (tRNA-Asp, -Asn, -His and -Tyr). Catalysis occurs through a double-displacement mechanism. The nucleophile active site attacks the C1' of nucleotide 34 to detach the guanine base from the RNA, forming a covalent enzyme-RNA intermediate. The proton acceptor active site deprotonates the incoming PreQ1, allowing a nucleophilic attack on the C1' of the ribose to form the product. After dissociation, two additional enzymatic reactions on the tRNA convert PreQ1 to queuine (Q), resulting in the hypermodified nucleoside queuosine (7-(((4,5-cis-dihydroxy-2-cyclopenten-1-yl)amino)methyl)-7-deazaguanosine). The chain is Queuine tRNA-ribosyltransferase from Shewanella sediminis (strain HAW-EB3).